Consider the following 378-residue polypeptide: UPF0754 membrane protein BCE33L0760 (378 aa).

The next 2 helical transmembrane spans lie at 1–21 (MNIW…GGFT) and 357–377 (YLGA…LLFL).

This sequence belongs to the UPF0754 family.

It localises to the cell membrane. This chain is UPF0754 membrane protein BCE33L0760, found in Bacillus cereus (strain ZK / E33L).